A 380-amino-acid polypeptide reads, in one-letter code: Cytochrome b (380 aa).

4 consecutive transmembrane segments (helical) span residues 34–54, 78–99, 114–134, and 179–199; these read FGSL…FLAM, WLIR…YLHI, WNIG…GYVL, and FFTF…VHLL. Heme b-binding residues include histidine 84 and histidine 98. Heme b-binding residues include histidine 183 and histidine 197. Histidine 202 contacts a ubiquinone. 4 helical membrane passes run 227–247, 289–309, 321–341, and 348–368; these read YKDL…ALFT, LGGV…PILH, ISQL…WIGG, and FITI…ILFP.

The protein belongs to the cytochrome b family. In terms of assembly, the cytochrome bc1 complex contains 3 respiratory subunits (MT-CYB, CYC1 and UQCRFS1), 2 core proteins (UQCRC1 and UQCRC2) and probably 6 low-molecular weight proteins. Requires heme b as cofactor.

Its subcellular location is the mitochondrion inner membrane. Its function is as follows. Component of the ubiquinol-cytochrome c reductase complex (complex III or cytochrome b-c1 complex) that is part of the mitochondrial respiratory chain. The b-c1 complex mediates electron transfer from ubiquinol to cytochrome c. Contributes to the generation of a proton gradient across the mitochondrial membrane that is then used for ATP synthesis. This chain is Cytochrome b (mt-cyb), found in Pastinachus sephen (Cowtail stingray).